The sequence spans 452 residues: Transcription factor SMP1 (452 aa).

Residues 3–57 (RRKIEIEPIKDDRNRTVTFIKRKAGLFKKAHELSVLCQVDIAVIILGSNNTFYEY) form the MADS-box domain. The segment at residues 58-87 (SSVDMSNLLNVHQNNTDLPHNIIEPSDYGD) is a DNA-binding region (mef2-type). The segment at 97-142 (NERKRRRRRATVLQPASHSGSCTVSSQDSSSVQNNGNLSAPLASND) is disordered. A compositionally biased stretch (low complexity) spans 115–127 (SGSCTVSSQDSSS).

This sequence belongs to the MEF2 family. In terms of assembly, can heterodimerize with RLM1. Interacts with HOG1. Phosphorylated by HOG1.

It localises to the nucleus. Its function is as follows. Transcription factor that controls part of the HOG1-mediated osmostress responses. Binds to the DNA sequence 5'-ACTACTA[TA](4)TAG-3'. Does not appear to function in the MPK1 pathway. This Saccharomyces cerevisiae (strain ATCC 204508 / S288c) (Baker's yeast) protein is Transcription factor SMP1 (SMP1).